The chain runs to 860 residues: MQEQYRPEDIETQVQLHWQEKQTFKVTEDASKEKYYCLSMLPYPSGRLHMGHVRNYTIGDVISRYQRMLGKNVLQPIGWDAFGLPAEGAAVKNNTAPAPWTYDNIEYMKNQLKLLGFGYDWDREIATCKPDYYRWEQWFFTKLYEKGMVYKKTSAVNWCPHDLTVLANEQVIDGCCWRCDTKVERKEIPQWFIKITDYAEQLLNDLDTLESWPEQVKTMQRNWIGRSEGVDIIFDVVDSEEKLSVYTTRPDTFMGVTYVAVAAGHPLSLQAAATNPALADFVAECRNTKVAEAEMATMEKKGMATGLYAIHPLTGEKLPIWAANFVLMDYGTGAVMAVPGHDARDWEFATKYNLPIKPVILAADGSEPDLSQEAMTEKGTLFNSGEFDGLNHEDGFNAIADKLVALGVGQRKVNYRLRDWGVSRQRYWGAPIPMVTLEDGTVVPTPEDQLPVILPEDVVMDGISSPIKADPEWAKTTVNGIPGLRETDTFDTFMESSWYYARYTCPQYDDGMLDPAAANYWLPVDQYVGGIEHAIMHLMYFRFFHKLLRDAGLVDSDEPAKRLLCQGMVLADAFYYTGNNGERIWVSPVDAIVERDDKGRIVKAVDAEGHELVYAGMSKMSKSKNNGIDPQVMVEKYGADTVRLFMMFASPAEMTLEWQESGVEGANRFLKRVWRLAFDHTAKGAVKPLDIASLTEEQKSLRRDLHKTIAKVTDDVGRRQTFNTAIAAVMELMNKLGRAPQETEQDRALMQEALLAVVRMLYPFTPHVCFSLWQALGGEGDIDTAPWPIADEQAMVEDSKLVVVQVNGKVRGRITVPADATEQQVRERAGQEHLVAKYLDGVTVRKVIYVPGKLLNLVVG.

The short motif at 42-52 is the 'HIGH' region element; that stretch reads PYPSGRLHMGH. Positions 619 to 623 match the 'KMSKS' region motif; sequence KMSKS. An ATP-binding site is contributed by Lys622.

Belongs to the class-I aminoacyl-tRNA synthetase family.

The protein localises to the cytoplasm. The enzyme catalyses tRNA(Leu) + L-leucine + ATP = L-leucyl-tRNA(Leu) + AMP + diphosphate. This is Leucine--tRNA ligase from Yersinia pseudotuberculosis serotype O:3 (strain YPIII).